Consider the following 345-residue polypeptide: Splicing factor YJU2 (345 aa).

Positions 43, 46, 80, and 83 each coordinate Zn(2+). The segment at 205–345 is disordered; the sequence is KRLRDSDSEE…YSDSDDSSSD (141 aa). Basic and acidic residues predominate over residues 217–232; that stretch reads ENAKERSKKHIADKPT. Low complexity-rich tracts occupy residues 308 to 317 and 327 to 337; these read SSITSSSASS and GSSLGLLGAYS.

This sequence belongs to the CWC16 family. YJU2 subfamily. As to quaternary structure, component of the spliceosome. Present in the activated B complex, the catalytically activated B* complex which catalyzes the branching, the catalytic step 1 C complex catalyzing the exon ligation, and the postcatalytic P complex containing the ligated exons (mRNA) and the excised lariat intron.

The protein resides in the nucleus. Part of the spliceosome which catalyzes two sequential transesterification reactions, first the excision of the non-coding intron from pre-mRNA and then the ligation of the coding exons to form the mature mRNA. Plays a role in stabilizing the structure of the spliceosome catalytic core and docking of the branch helix into the active site, producing 5'-exon and lariat intron-3'-intermediates. May protect cells from TP53-dependent apoptosis upon dsDNA break damage through association with PRP19-CD5L complex. The polypeptide is Splicing factor YJU2 (Danio rerio (Zebrafish)).